The following is a 139-amino-acid chain: Large ribosomal subunit protein uL16 (139 aa).

The protein belongs to the universal ribosomal protein uL16 family. In terms of assembly, part of the 50S ribosomal subunit.

Functionally, binds 23S rRNA and is also seen to make contacts with the A and possibly P site tRNAs. This chain is Large ribosomal subunit protein uL16, found in Mycoplasma pneumoniae (strain ATCC 29342 / M129 / Subtype 1) (Mycoplasmoides pneumoniae).